We begin with the raw amino-acid sequence, 95 residues long: Aspartyl/glutamyl-tRNA(Asn/Gln) amidotransferase subunit C (95 aa).

This sequence belongs to the GatC family. In terms of assembly, heterotrimer of A, B and C subunits.

It catalyses the reaction L-glutamyl-tRNA(Gln) + L-glutamine + ATP + H2O = L-glutaminyl-tRNA(Gln) + L-glutamate + ADP + phosphate + H(+). The catalysed reaction is L-aspartyl-tRNA(Asn) + L-glutamine + ATP + H2O = L-asparaginyl-tRNA(Asn) + L-glutamate + ADP + phosphate + 2 H(+). In terms of biological role, allows the formation of correctly charged Asn-tRNA(Asn) or Gln-tRNA(Gln) through the transamidation of misacylated Asp-tRNA(Asn) or Glu-tRNA(Gln) in organisms which lack either or both of asparaginyl-tRNA or glutaminyl-tRNA synthetases. The reaction takes place in the presence of glutamine and ATP through an activated phospho-Asp-tRNA(Asn) or phospho-Glu-tRNA(Gln). The sequence is that of Aspartyl/glutamyl-tRNA(Asn/Gln) amidotransferase subunit C from Anaeromyxobacter sp. (strain Fw109-5).